The chain runs to 426 residues: Serine--tRNA ligase (426 aa).

233–235 (TSE) lines the L-serine pocket. 264–266 (RAE) is an ATP binding site. E287 is a binding site for L-serine. Residue 351–354 (EISS) coordinates ATP. S387 is an L-serine binding site.

Belongs to the class-II aminoacyl-tRNA synthetase family. Type-1 seryl-tRNA synthetase subfamily. Homodimer. The tRNA molecule binds across the dimer.

Its subcellular location is the cytoplasm. The enzyme catalyses tRNA(Ser) + L-serine + ATP = L-seryl-tRNA(Ser) + AMP + diphosphate + H(+). It catalyses the reaction tRNA(Sec) + L-serine + ATP = L-seryl-tRNA(Sec) + AMP + diphosphate + H(+). It functions in the pathway aminoacyl-tRNA biosynthesis; selenocysteinyl-tRNA(Sec) biosynthesis; L-seryl-tRNA(Sec) from L-serine and tRNA(Sec): step 1/1. Its function is as follows. Catalyzes the attachment of serine to tRNA(Ser). Is also able to aminoacylate tRNA(Sec) with serine, to form the misacylated tRNA L-seryl-tRNA(Sec), which will be further converted into selenocysteinyl-tRNA(Sec). The protein is Serine--tRNA ligase of Xanthomonas euvesicatoria pv. vesicatoria (strain 85-10) (Xanthomonas campestris pv. vesicatoria).